The primary structure comprises 335 residues: Protein-glutamate methylesterase/protein-glutamine glutaminase 3 (335 aa).

The Response regulatory domain maps to 2–119 (RIGIVNDMPL…GNPQTAAAPL (118 aa)). Residue Asp-53 is modified to 4-aspartylphosphate. The CheB-type methylesterase domain maps to 144 to 335 (PKAGGARQRL…IAPRLAEVFD (192 aa)). Catalysis depends on residues Ser-159, His-186, and Asp-279.

The protein belongs to the CheB family. Post-translationally, phosphorylated by CheA. Phosphorylation of the N-terminal regulatory domain activates the methylesterase activity.

It is found in the cytoplasm. The catalysed reaction is [protein]-L-glutamate 5-O-methyl ester + H2O = L-glutamyl-[protein] + methanol + H(+). It carries out the reaction L-glutaminyl-[protein] + H2O = L-glutamyl-[protein] + NH4(+). Functionally, involved in chemotaxis. Part of a chemotaxis signal transduction system that modulates chemotaxis in response to various stimuli. Catalyzes the demethylation of specific methylglutamate residues introduced into the chemoreceptors (methyl-accepting chemotaxis proteins or MCP) by CheR. Also mediates the irreversible deamidation of specific glutamine residues to glutamic acid. This Pseudomonas aeruginosa (strain ATCC 15692 / DSM 22644 / CIP 104116 / JCM 14847 / LMG 12228 / 1C / PRS 101 / PAO1) protein is Protein-glutamate methylesterase/protein-glutamine glutaminase 3.